We begin with the raw amino-acid sequence, 249 residues long: tRNA pseudouridine synthase A (249 aa).

The Nucleophile role is filled by Asp-53. Tyr-111 serves as a coordination point for substrate.

Belongs to the tRNA pseudouridine synthase TruA family. As to quaternary structure, homodimer.

It carries out the reaction uridine(38/39/40) in tRNA = pseudouridine(38/39/40) in tRNA. Formation of pseudouridine at positions 38, 39 and 40 in the anticodon stem and loop of transfer RNAs. The sequence is that of tRNA pseudouridine synthase A from Streptococcus gordonii (strain Challis / ATCC 35105 / BCRC 15272 / CH1 / DL1 / V288).